The chain runs to 593 residues: Tyrosine-protein phosphatase non-receptor type 11 (593 aa).

SH2 domains are found at residues 6–102 (WFHP…KYPL) and 112–216 (WFHG…KQPL). The region spanning 247–521 (FWEEFETLQQ…RFIYMAVQHY (275 aa)) is the Tyrosine-protein phosphatase domain. Residues Asp425, 459-465 (CSAGIGR), and Gln506 contribute to the substrate site. The active-site Phosphocysteine intermediate is the Cys459. Polar residues predominate over residues 548–557 (SLSDQTSGDQ). A disordered region spans residues 548–575 (SLSDQTSGDQSPLPPCTPTPTCPEMRED). The span at 559 to 568 (PLPPCTPTPT) shows a compositional bias: pro residues.

This sequence belongs to the protein-tyrosine phosphatase family. Non-receptor class 2 subfamily. In terms of processing, phosphorylated by tyrosine-protein kinases. In terms of tissue distribution, expressed in embryonic fibroblast, hematopoietic, erythroid, myeloid and lymphoid cells.

Its subcellular location is the cytoplasm. It catalyses the reaction O-phospho-L-tyrosyl-[protein] + H2O = L-tyrosyl-[protein] + phosphate. In terms of biological role, this PTPase activity may directly link growth factor receptors and other signaling proteins through protein-tyrosine phosphorylation. The SH2 regions may interact with other cellular components to modulate its own phosphatase activity against interacting substrates. May play a positive role during the stages of erythroid cell proliferation. The chain is Tyrosine-protein phosphatase non-receptor type 11 (PTPN11) from Gallus gallus (Chicken).